Consider the following 508-residue polypeptide: Catalase (508 aa).

An N-terminal signal peptide occupies residues 1–21 (MHMSKSFLLISMGLASISVHA). Catalysis depends on residues His-72 and Asn-145. Tyr-353 lines the heme pocket. The segment covering 373–392 (PKSPVANHNQDGPSNNSTGL) has biased composition (polar residues). The segment at 373–396 (PKSPVANHNQDGPSNNSTGLGNVD) is disordered.

Belongs to the catalase family. The cofactor is heme.

It is found in the periplasm. It catalyses the reaction 2 H2O2 = O2 + 2 H2O. Its function is as follows. Decomposes hydrogen peroxide into water and oxygen; serves to protect cells from the toxic effects of hydrogen peroxide. This chain is Catalase, found in Vibrio vulnificus (strain YJ016).